A 421-amino-acid chain; its full sequence is Probable N-acetylgalactosaminyltransferase 8 (421 aa).

Topologically, residues 1–3 are cytoplasmic; that stretch reads MRR. A helical; Signal-anchor for type II membrane protein membrane pass occupies residues 4–24; it reads HVVLSIFVFAGIVFAAEEAEK. Residues 25–421 lie on the Lumenal side of the membrane; the sequence is LPKCEHVDPY…ELEPKVHDEL (397 aa). Asn-52 and Asn-58 each carry an N-linked (GlcNAc...) asparagine glycan. Intrachain disulfides connect Cys-98–Cys-331 and Cys-322–Cys-399. A catalytic subdomain A region spans residues 106 to 219; it reads SYSTSVVVIH…ERWLEPLLQP (114 aa). Substrate contacts are provided by Asp-147 and Arg-180. Asp-203 lines the Mn(2+) pocket. Substrate is bound at residue Ser-204. Mn(2+) is bound at residue His-205. The catalytic subdomain B stretch occupies residues 277-339; the sequence is PFNSPAMPGG…PCSRVGHVFR (63 aa). Trp-308 provides a ligand contact to substrate. His-336 contacts Mn(2+). Substrate is bound by residues Arg-339 and Tyr-344. The short motif at 418–421 is the Prevents secretion from ER element; the sequence is HDEL.

It belongs to the glycosyltransferase 2 family. GalNAc-T subfamily. It depends on Mn(2+) as a cofactor.

The protein localises to the golgi apparatus membrane. It functions in the pathway protein modification; protein glycosylation. Functionally, potential glycopeptide transferase involved in O-linked oligosaccharide biosynthesis. In contrast to other members of the family, it does not act as a peptide transferase that transfers GalNAc onto serine or threonine residue on peptides that have been tested. Some peptide transferase activity is however not excluded, considering that its appropriate peptide substrate may remain unidentified. The chain is Probable N-acetylgalactosaminyltransferase 8 (gly-8) from Caenorhabditis elegans.